The following is a 563-amino-acid chain: MENIRSFMSFPASRKVYVEGSRPDVRVPMREIALSPTKTPQGEVENKPVRVYDTTGPYTDPDFEPNVEKGLPLLRRNWIVERGDVEETEPQSTAGRAASLPFARRPLRAKPGKVVTQMHYAKKGIITPEMEFVAIREQIDPEIVRQEVAAGRAIIPSNINHPESEPMIIGRRFHVKINANIGNSAVSSSIENEVEKLLWAVRWGADTVMDLSTGKQIHETREYIIRNSPVPIGTVPIYQALEKVGGVPEKLTWDVYRETLIEQAEQGVDYMTIHAGVRLHYIPLTVNRTTGIVSRGGSIIAQWCLAHHEENFLYTHFEEICEILKQYDVAISLGDGLRPGSIADANDEAQFAELETLGELTKIAWEHDVQVMIEGPGHIPMQKIRENVEREQELCHGAPFYTLGPLVTDIAPGYDHITSAIGAAIIGAYGTSMLCYVTPKEHLGLPNKEDVRVGVVTYKIAAHAADLAKGHPAAQQRDDALSKARFEFRWNDQFNLSLDPERAREYHDETLPAEAAKTAHFCSMCGPKFCSMNISHELQRKIKEEGMKEKANEFVRGGSSLYR.

Residues N180, M209, Y238, H274, 294–296 (SRG), 335–338 (DGLR), and E374 contribute to the substrate site. Position 378 (H378) interacts with Zn(2+). Y401 is a substrate binding site. H442 serves as a coordination point for Zn(2+). [4Fe-4S] cluster-binding residues include C522, C525, and C530.

The protein belongs to the ThiC family. Requires [4Fe-4S] cluster as cofactor.

It carries out the reaction 5-amino-1-(5-phospho-beta-D-ribosyl)imidazole + S-adenosyl-L-methionine = 4-amino-2-methyl-5-(phosphooxymethyl)pyrimidine + CO + 5'-deoxyadenosine + formate + L-methionine + 3 H(+). Its pathway is cofactor biosynthesis; thiamine diphosphate biosynthesis. In terms of biological role, catalyzes the synthesis of the hydroxymethylpyrimidine phosphate (HMP-P) moiety of thiamine from aminoimidazole ribotide (AIR) in a radical S-adenosyl-L-methionine (SAM)-dependent reaction. This is Phosphomethylpyrimidine synthase from Geobacillus thermodenitrificans (strain NG80-2).